The sequence spans 199 residues: Protein GrpE (199 aa).

A disordered region spans residues 1-27 (MSEQNTNHESPEQNVAHDNIEHSDSIL). Residues 18-27 (DNIEHSDSIL) are compositionally biased toward basic and acidic residues.

This sequence belongs to the GrpE family. Homodimer.

The protein localises to the cytoplasm. Functionally, participates actively in the response to hyperosmotic and heat shock by preventing the aggregation of stress-denatured proteins, in association with DnaK and GrpE. It is the nucleotide exchange factor for DnaK and may function as a thermosensor. Unfolded proteins bind initially to DnaJ; upon interaction with the DnaJ-bound protein, DnaK hydrolyzes its bound ATP, resulting in the formation of a stable complex. GrpE releases ADP from DnaK; ATP binding to DnaK triggers the release of the substrate protein, thus completing the reaction cycle. Several rounds of ATP-dependent interactions between DnaJ, DnaK and GrpE are required for fully efficient folding. The polypeptide is Protein GrpE (Psychrobacter sp. (strain St1)).